The primary structure comprises 992 residues: MLNFFRRLLGDSNEKEIRRLQPIVEEINRLGPEFARLSDAELRAKTDEFRQRLADGETLDDILPEAFATVREAAARTIGLRHYDVQLIGGIVLHQGKIAEMKTGEGKTLVATLPLYLNALEGKGVHLVTVNDYLAKVGAGWMGPIYHFLGLSVGFIAHDQSALYDPDYIDPNANPEDQRLVHWRPCTRREAYLADITYGTNNEFGFDYLRDNMAYDKSQLVQRELHYAIVDEVDNILIDEARTPLIISGPAQKSSDLYRQMAKLVRQLRRSSVTAKQVKEEGLEPDGDFFVDERTKSIYLSEKGIEKLEKLLNIPPGESLFDPEHYEKTHYVENALKAQFIYQRDRDYMVTPNGEVVIIDEFTGRAMPGRRWSDGLHQAIEAKEGVPIKNENVTLATITFQNYFRMYKKLAGMTGTAYTEREEFAKIYNLDVVVIPTHKPMIRKDLPDQIYATEEAKFRAVLREVQEMHEIGRPVLIGTTSVETSERLSAMLKQAGIPHNVLNAKHHEREAAIVAQAGRKGAVTVATNMAGRGTDILLGGNPDGLVEEFLRKEGLTLETATPEQKRAAWEKAKALTEAEGEEVRQLGGLHVIGTERHEARRIDNQLRGRAGRQGDPGSSRFFLSLEDELLRRFGPVERIKGLMERFVDSDVPLQAGLLDRTIESAQTRVEGYNFDIRKHTVEFDDVMNKQRQIIYADRKAILDEADMRERVLDLMAEEIQRQIDEHLSDGVDEFGLTELLRVYRRIDPTLPATVTAETLKGKTKEEIEQFLLDHLETTYAEREKAIGPEVMRTVERRVMLGAIDRQWVDYLTAMDELRQNILLQAYAQKDPLVEFKRESFRMFDELKANIAHDIVYNIIPASFQYEAYLRQIAEEQARRLATAQIAGGSSEVEQTRKPQRRTVQQIGRNDPCPCGSGKKFKHCHLGREHELAAFMNNAPATTPKVEPQPVKPAIAEEAAKIKAAIDNGTLPAASPKTPRGRQPQAVPRGKKR.

Residues Gln86, Gly104–Thr108, and Asp535 contribute to the ATP site. The tract at residues Ile885–Asp910 is disordered. 4 residues coordinate Zn(2+): Cys912, Cys914, Cys923, and His924. A disordered region spans residues Ile965 to Arg992.

It belongs to the SecA family. In terms of assembly, monomer and homodimer. Part of the essential Sec protein translocation apparatus which comprises SecA, SecYEG and auxiliary proteins SecDF. Other proteins may also be involved. Zn(2+) is required as a cofactor.

It is found in the cell membrane. The protein localises to the cytoplasm. It carries out the reaction ATP + H2O + cellular proteinSide 1 = ADP + phosphate + cellular proteinSide 2.. Part of the Sec protein translocase complex. Interacts with the SecYEG preprotein conducting channel. Has a central role in coupling the hydrolysis of ATP to the transfer of proteins into and across the cell membrane, serving as an ATP-driven molecular motor driving the stepwise translocation of polypeptide chains across the membrane. This Chloroflexus aggregans (strain MD-66 / DSM 9485) protein is Protein translocase subunit SecA.